The chain runs to 252 residues: Sensory transduction protein LytR (252 aa).

The Response regulatory domain occupies 2–116; that stretch reads KALIVDDEPL…RINQAVNKVD (115 aa). At aspartate 53 the chain carries 4-aspartylphosphate. The HTH LytTR-type domain maps to 147–251; sequence LPIEVDERIH…MKTFKQQLGL (105 aa).

Phosphorylated by LytS.

It localises to the cytoplasm. Member of the two-component regulatory system LytR/LytS that probably regulates genes involved in cell wall metabolism. The chain is Sensory transduction protein LytR (lytR) from Staphylococcus epidermidis (strain ATCC 12228 / FDA PCI 1200).